A 563-amino-acid polypeptide reads, in one-letter code: L-lactate permease (563 aa).

14 consecutive transmembrane segments (helical) span residues 14–34, 37–57, 73–93, 131–151, 157–177, 194–214, 220–240, 249–269, 304–324, 381–401, 419–439, 448–468, 506–526, and 542–562; these read LLLS…ALAI, MKGY…AVLV, AVYG…LYKI, GAAG…GLGF, AGIC…GIPI, MVGR…IIIM, ALEI…VQYL, LPDV…LKWW, IFKA…WGIP, LGSA…ITAI, LPIL…SSGM, ALTG…GVFI, VTGK…VGLA, and FLLL…SWMI.

It belongs to the lactate permease family.

Its subcellular location is the cell membrane. In terms of biological role, is the principal permease for the uptake of L-lactate in B.subtilis. The protein is L-lactate permease (lutP) of Bacillus subtilis (strain 168).